We begin with the raw amino-acid sequence, 1547 residues long: Mediator of RNA polymerase II transcription subunit 12 (1547 aa).

Disordered regions lie at residues 1–63 and 1356–1509; these read MTSR…RPHI and PVIP…QQRD. The segment covering 1357 to 1369 has biased composition (pro residues); sequence VIPPLEPPQPPNP. The span at 1379–1390 shows a compositional bias: polar residues; the sequence is YQSPQMTSNTAA. 2 stretches are compositionally biased toward low complexity: residues 1398–1413 and 1446–1468; these read QQQQ…QQTQ and LSPL…RASQ. Composition is skewed to polar residues over residues 1469–1480 and 1499–1509; these read PSPIHSQRPTSV and AHTSYVNQQRD.

Belongs to the Mediator complex subunit 12 family. In terms of assembly, component of the SRB8-11 complex, which itself associates with the Mediator complex.

The protein localises to the nucleus. In terms of biological role, component of the SRB8-11 complex. The SRB8-11 complex is a regulatory module of the Mediator complex which is itself involved in regulation of basal and activated RNA polymerase II-dependent transcription. The SRB8-11 complex may be involved in the transcriptional repression of a subset of genes regulated by Mediator. It may inhibit the association of the Mediator complex with RNA polymerase II to form the holoenzyme complex. The chain is Mediator of RNA polymerase II transcription subunit 12 (SRB8) from Phaeosphaeria nodorum (strain SN15 / ATCC MYA-4574 / FGSC 10173) (Glume blotch fungus).